A 239-amino-acid polypeptide reads, in one-letter code: MNQTPLRLLIHGASGRMGQALLRLAAEHPETLQIAAAVTGRAPAQRVVDGVPFFAASELPGAPAFDVAIDFSLPEGFDPMLALCVERGAGLVSGTTGISSTQRQALEAAAARIPLVWASNFSLGVAVLDELVERAAQALAGWDCDIVESHHTQKKDAPSGTALTLGAAAQRGGAEPHYASLRAGDIVGEHLVQFTGLGERIELVHRATNRDIFARGALFAARQLQGRAPGSYRVRDLLQ.

Residues 12–17, 94–96, and 118–121 contribute to the NAD(+) site; these read GASGRM, GTT, and ASNF. His-150 functions as the Proton donor/acceptor in the catalytic mechanism. Residue His-151 coordinates (S)-2,3,4,5-tetrahydrodipicolinate. The active-site Proton donor is Lys-154. 160-161 is a binding site for (S)-2,3,4,5-tetrahydrodipicolinate; sequence GT.

This sequence belongs to the DapB family.

The protein resides in the cytoplasm. The catalysed reaction is (S)-2,3,4,5-tetrahydrodipicolinate + NAD(+) + H2O = (2S,4S)-4-hydroxy-2,3,4,5-tetrahydrodipicolinate + NADH + H(+). The enzyme catalyses (S)-2,3,4,5-tetrahydrodipicolinate + NADP(+) + H2O = (2S,4S)-4-hydroxy-2,3,4,5-tetrahydrodipicolinate + NADPH + H(+). The protein operates within amino-acid biosynthesis; L-lysine biosynthesis via DAP pathway; (S)-tetrahydrodipicolinate from L-aspartate: step 4/4. Its function is as follows. Catalyzes the conversion of 4-hydroxy-tetrahydrodipicolinate (HTPA) to tetrahydrodipicolinate. The protein is 4-hydroxy-tetrahydrodipicolinate reductase of Stenotrophomonas maltophilia (strain K279a).